Here is a 263-residue protein sequence, read N- to C-terminus: Lens fiber major intrinsic protein (263 aa).

Residues 1–9 (MWELRSASF) lie on the Cytoplasmic side of the membrane. The chain crosses the membrane as a helical span at residues 10–29 (WRAIFAEFFATLFYVFFGLG). The Extracellular segment spans residues 30–41 (ASLRWAPGPLHV). The helical transmembrane segment at 42 to 59 (LQVALAFGLALATLVQAV) threads the bilayer. At 60–61 (GH) the chain is on the cytoplasmic side. Residues 62–77 (ISGAHVNPAVTFAFLV) constitute an intramembrane region (discontinuously helical). The short motif at 68–70 (NPA) is the NPA 1 element. Topologically, residues 78 to 82 (GSQMS) are cytoplasmic. A helical membrane pass occupies residues 83 to 106 (LLRAICYMAAQLLGAVAGAAVLYS). At 107 to 127 (VTPAAVRGNLALNTLHPGVSL) the chain is on the extracellular side. A helical transmembrane segment spans residues 128-148 (GQATTVEIFLTLQFVLCIFAT). The Cytoplasmic segment spans residues 149–156 (YDERRNGR). The chain crosses the membrane as a helical span at residues 157 to 175 (LGSVALAVGFSLTLGHLFG). Residues 176-178 (MYY) are Extracellular-facing. Positions 179–193 (TGAGMNPARSFAPAI) form an intramembrane region, discontinuously helical. The NPA 2 motif lies at 184 to 186 (NPA). Topologically, residues 194–200 (LTRNFTN) are extracellular. Residues 201-222 (HWVYWVGPIIGGGLASLLYDFL) form a helical membrane-spanning segment. Residues 223–263 (LFPRLKSVSERLSILKGARPSDSNGQPEGTGEPVELKTQAL) lie on the Cytoplasmic side of the membrane. Residues 227-237 (LKSVSERLSIL) are interaction with CALM. A phosphoserine mark is found at S235, S243, and S245. A disordered region spans residues 240-263 (ARPSDSNGQPEGTGEPVELKTQAL). N246 bears the Deamidated asparagine mark.

Belongs to the MIP/aquaporin (TC 1.A.8) family. In terms of assembly, homotetramer; each monomer provides an independent water pore. Two homotetramers on opposing membranes can dimerize, forming a cell-cell junction. Interacts with CALM; the calcium-calmodulin/CALM complex interacts with the cytoplasmic domains of two aquaporins, leading to channel closure. Interacts with BFSP1 (via C-terminus); prevents calcium-dependent inhibition of the water channel activity. Post-translationally, subject to partial proteolytic cleavage in the eye lens core. Partial proteolysis promotes interactions between tetramers from adjoining membranes. In terms of processing, fatty acylated at Met-1 and Lys-238. The acyl modifications, in decreasing order of ion abundance, are: oleoyl (C18:1) &gt; palmitoyl (C16:0) &gt; stearoyl (C18:0) &gt; eicosenoyl (C20:1) &gt; dihomo-gamma-linolenoyl (C20:3) &gt; palmitoleoyl (C16:1) &gt; eicosadienoyl (C20:2).

The protein localises to the cell membrane. It localises to the cell junction. It catalyses the reaction H2O(in) = H2O(out). With respect to regulation, the water channel activity is inhibited by calcium through calmodulin/CALM. Aquaporins form homotetrameric transmembrane channels, with each monomer independently mediating water transport across the plasma membrane along its osmotic gradient. Specifically expressed in lens fiber cells, this aquaporin is crucial for maintaining lens water homeostasis and transparency. Beyond water permeability, it also acts as a cell-to-cell adhesion molecule, forming thin junctions between lens fiber cells that are essential for maintaining the ordered structure and transparency of the lens. The chain is Lens fiber major intrinsic protein from Oryctolagus cuniculus (Rabbit).